The following is a 172-amino-acid chain: Small ribosomal subunit protein uS5 (172 aa).

Residues 17 to 80 (MREKMIAVNR…EEARRKMIKV (64 aa)) enclose the S5 DRBM domain.

The protein belongs to the universal ribosomal protein uS5 family. As to quaternary structure, part of the 30S ribosomal subunit. Contacts proteins S4 and S8.

Functionally, with S4 and S12 plays an important role in translational accuracy. Located at the back of the 30S subunit body where it stabilizes the conformation of the head with respect to the body. The chain is Small ribosomal subunit protein uS5 from Janthinobacterium sp. (strain Marseille) (Minibacterium massiliensis).